Reading from the N-terminus, the 526-residue chain is Thioredoxin reductase 2, mitochondrial (526 aa).

The N-terminal 36 residues, 1 to 36 (MAAIVAALRGSSGRFRPQTRVLTRGTRGAAGAASAA), are a transit peptide targeting the mitochondrion. Residue 43 to 72 (DLLVIGGGSGGLACAKEAAQLGRKVAVADY) participates in FAD binding. Position 81 is an N6-succinyllysine (K81). Cysteines 88 and 93 form a disulfide. K177 and K331 each carry N6-succinyllysine. Residue H499 is the Proton acceptor of the active site. Positions 524–525 (CU) form a cross-link, cysteinyl-selenocysteine (Cys-Sec). A non-standard amino acid (selenocysteine) is located at residue U525.

The protein belongs to the class-I pyridine nucleotide-disulfide oxidoreductase family. In terms of assembly, homodimer. FAD is required as a cofactor. In terms of tissue distribution, expressed in liver, kidney, adrenal gland and heart.

Its subcellular location is the mitochondrion. The catalysed reaction is [thioredoxin]-dithiol + NADP(+) = [thioredoxin]-disulfide + NADPH + H(+). In terms of biological role, involved in the control of reactive oxygen species levels and the regulation of mitochondrial redox homeostasis. Maintains mitochondrial thioredoxin in a reduced state. May play a role in redox-regulated cell signaling. The protein is Thioredoxin reductase 2, mitochondrial (Txnrd2) of Rattus norvegicus (Rat).